A 348-amino-acid chain; its full sequence is Sulfate/thiosulfate import ATP-binding protein CysA (348 aa).

Positions isoleucine 3–valine 237 constitute an ABC transporter domain. Glycine 35–threonine 42 contacts ATP.

It belongs to the ABC transporter superfamily. Sulfate/tungstate importer (TC 3.A.1.6) family. As to quaternary structure, the complex is composed of two ATP-binding proteins (CysA), two transmembrane proteins (CysT and CysW) and a solute-binding protein (CysP).

It localises to the cell inner membrane. The catalysed reaction is sulfate(out) + ATP + H2O = sulfate(in) + ADP + phosphate + H(+). It catalyses the reaction thiosulfate(out) + ATP + H2O = thiosulfate(in) + ADP + phosphate + H(+). In terms of biological role, part of the ABC transporter complex CysAWTP involved in sulfate/thiosulfate import. Responsible for energy coupling to the transport system. This chain is Sulfate/thiosulfate import ATP-binding protein CysA, found in Xylella fastidiosa (strain Temecula1 / ATCC 700964).